A 100-amino-acid chain; its full sequence is Protein Tat (100 aa).

Residues 1–20 (MEPVNPSLEPWKHPGSQPKT) form a disordered region. The interaction with human CREBBP stretch occupies residues 1-24 (MEPVNPSLEPWKHPGSQPKTACTN). Residues 1–48 (MEPVNPSLEPWKHPGSQPKTACTNCYCKKCCFHCQACFITKGLGISYG) form a transactivation region. Residues cysteine 22, cysteine 25, and cysteine 27 each coordinate Zn(2+). The cysteine-rich stretch occupies residues 22–37 (CTNCYCKKCCFHCQAC). Residue lysine 28 is modified to N6-acetyllysine; by host PCAF. Cysteine 30, histidine 33, cysteine 34, and cysteine 37 together coordinate Zn(2+). The core stretch occupies residues 38–48 (FITKGLGISYG). A disordered region spans residues 47 to 100 (YGRKKRRQRRRPPQDSQTHQVSLSKPSSQPRGDPTGPKEQKKKVERETETDPVH). Basic residues predominate over residues 48 to 57 (GRKKRRQRRR). The Nuclear localization signal, RNA-binding (TAR), and protein transduction signature appears at 49–57 (RKKRRQRRR). The tract at residues 49-85 (RKKRRQRRRPPQDSQTHQVSLSKPSSQPRGDPTGPKE) is interaction with the host capping enzyme RNGTT. An N6-acetyllysine; by host EP300 and GCN5L2 mark is found at lysine 50 and lysine 51. Residues arginine 52 and arginine 53 each carry the asymmetric dimethylarginine; by host PRMT6 modification. The span at 61–76 (DSQTHQVSLSKPSSQP) shows a compositional bias: polar residues. A Glycyl lysine isopeptide (Lys-Gly) (interchain with G-Cter in ubiquitin) cross-link involves residue lysine 71. The short motif at 77 to 79 (RGD) is the Cell attachment site element. Basic and acidic residues predominate over residues 82-100 (GPKEQKKKVERETETDPVH).

The protein belongs to the lentiviruses Tat family. In terms of assembly, interacts with host CCNT1. Associates with the P-TEFb complex composed at least of Tat, P-TEFb (CDK9 and CCNT1), TAR RNA, RNA Pol II. Recruits the HATs CREBBP, TAF1/TFIID, EP300, PCAF and GCN5L2. Interacts with host KAT5/Tip60; this interaction targets the latter to degradation. Interacts with the host deacetylase SIRT1. Interacts with host capping enzyme RNGTT; this interaction stimulates RNGTT. Binds to host KDR, and to the host integrins ITGAV/ITGB3 and ITGA5/ITGB1. Interacts with host KPNB1/importin beta-1 without previous binding to KPNA1/importin alpha-1. Interacts with EIF2AK2. Interacts with host nucleosome assembly protein NAP1L1; this interaction may be required for the transport of Tat within the nucleus, since the two proteins interact at the nuclear rim. Interacts with host C1QBP/SF2P32; this interaction involves lysine-acetylated Tat. Interacts with the host chemokine receptors CCR2, CCR3 and CXCR4. Interacts with host DPP4/CD26; this interaction may trigger an anti-proliferative effect. Interacts with host LDLR. Interacts with the host extracellular matrix metalloproteinase MMP1. Interacts with host PRMT6; this interaction mediates Tat's methylation. Interacts with, and is ubiquitinated by MDM2/Hdm2. Interacts with host PSMC3 and HTATIP2. Interacts with STAB1; this interaction may overcome SATB1-mediated repression of IL2 and IL2RA (interleukin) in T cells by binding to the same domain than HDAC1. Interacts (when acetylated) with human CDK13, thereby increasing HIV-1 mRNA splicing and promoting the production of the doubly spliced HIV-1 protein Nef. Interacts with host TBP; this interaction modulates the activity of transcriptional pre-initiation complex. Interacts with host RELA. Interacts with host PLSCR1; this interaction negatively regulates Tat transactivation activity by altering its subcellular distribution. Asymmetrical arginine methylation by host PRMT6 seems to diminish the transactivation capacity of Tat and affects the interaction with host CCNT1. In terms of processing, acetylation by EP300, CREBBP, GCN5L2/GCN5 and PCAF regulates the transactivation activity of Tat. EP300-mediated acetylation of Lys-50 promotes dissociation of Tat from the TAR RNA through the competitive binding to PCAF's bromodomain. In addition, the non-acetylated Tat's N-terminus can also interact with PCAF. PCAF-mediated acetylation of Lys-28 enhances Tat's binding to CCNT1. Lys-50 is deacetylated by SIRT1. Post-translationally, polyubiquitination by host MDM2 does not target Tat to degradation, but activates its transactivation function and fosters interaction with CCNT1 and TAR RNA. Phosphorylated by EIF2AK2 on serine and threonine residues adjacent to the basic region important for TAR RNA binding and function. Phosphorylation of Tat by EIF2AK2 is dependent on the prior activation of EIF2AK2 by dsRNA.

The protein localises to the host nucleus. It is found in the host nucleolus. It localises to the host cytoplasm. The protein resides in the secreted. Its function is as follows. Transcriptional activator that increases RNA Pol II processivity, thereby increasing the level of full-length viral transcripts. Recognizes a hairpin structure at the 5'-LTR of the nascent viral mRNAs referred to as the transactivation responsive RNA element (TAR) and recruits the cyclin T1-CDK9 complex (P-TEFb complex) that will in turn hyperphosphorylate the RNA polymerase II to allow efficient elongation. The CDK9 component of P-TEFb and other Tat-activated kinases hyperphosphorylate the C-terminus of RNA Pol II that becomes stabilized and much more processive. Other factors such as HTATSF1/Tat-SF1, SUPT5H/SPT5, and HTATIP2 are also important for Tat's function. Besides its effect on RNA Pol II processivity, Tat induces chromatin remodeling of proviral genes by recruiting the histone acetyltransferases (HATs) CREBBP, EP300 and PCAF to the chromatin. This also contributes to the increase in proviral transcription rate, especially when the provirus integrates in transcriptionally silent region of the host genome. To ensure maximal activation of the LTR, Tat mediates nuclear translocation of NF-kappa-B by interacting with host RELA. Through its interaction with host TBP, Tat may also modulate transcription initiation. Tat can reactivate a latently infected cell by penetrating in it and transactivating its LTR promoter. In the cytoplasm, Tat is thought to act as a translational activator of HIV-1 mRNAs. Functionally, extracellular circulating Tat can be endocytosed by surrounding uninfected cells via the binding to several surface receptors such as CD26, CXCR4, heparan sulfate proteoglycans (HSPG) or LDLR. Neurons are rarely infected, but they internalize Tat via their LDLR. Through its interaction with nuclear HATs, Tat is potentially able to control the acetylation-dependent cellular gene expression. Modulates the expression of many cellular genes involved in cell survival, proliferation or in coding for cytokines or cytokine receptors. Tat plays a role in T-cell and neurons apoptosis. Tat induced neurotoxicity and apoptosis probably contribute to neuroAIDS. Circulating Tat also acts as a chemokine-like and/or growth factor-like molecule that binds to specific receptors on the surface of the cells, affecting many cellular pathways. In the vascular system, Tat binds to ITGAV/ITGB3 and ITGA5/ITGB1 integrins dimers at the surface of endothelial cells and competes with bFGF for heparin-binding sites, leading to an excess of soluble bFGF. This is Protein Tat from Homo sapiens (Human).